We begin with the raw amino-acid sequence, 22 residues long: thr operon leader peptide (22 aa).

Belongs to the thr operon leader peptide family.

Its function is as follows. This protein is involved in control of the biosynthesis of threonine. This chain is thr operon leader peptide, found in Yersinia enterocolitica serotype O:8 / biotype 1B (strain NCTC 13174 / 8081).